A 647-amino-acid polypeptide reads, in one-letter code: ATP-binding protein Uup (647 aa).

2 ABC transporter domains span residues 1–253 (MALI…RVEA) and 320–546 (FEME…AKAK). ATP is bound by residues 36 to 43 (GRNGAGKS) and 352 to 359 (GPNGCGKT). Basic and acidic residues predominate over residues 545–563 (AKKSEPLKEESAVKNDRTS). Positions 545-569 (AKKSEPLKEESAVKNDRTSKPKSVK) are disordered. Residues 559 to 647 (NDRTSKPKSV…EKKNLVEGKA (89 aa)) form a C-terminal domain (CTD), binds DNA region.

This sequence belongs to the ABC transporter superfamily. ABCF family. Uup subfamily.

The protein resides in the cytoplasm. It catalyses the reaction ATP + H2O = ADP + phosphate + H(+). In terms of biological role, probably plays a role in ribosome assembly or function. May be involved in resolution of branched DNA intermediates that result from template switching in postreplication gaps. Binds DNA and has ATPase activity. This chain is ATP-binding protein Uup, found in Haemophilus influenzae (strain ATCC 51907 / DSM 11121 / KW20 / Rd).